A 121-amino-acid chain; its full sequence is Protein yippee-like 5 (121 aa).

The Yippee domain occupies 13–110 (RLFSCANCDA…LERALVRESE (98 aa)). Residues cysteine 17, cysteine 20, cysteine 73, and cysteine 76 each coordinate Zn(2+). Residue serine 118 is modified to Phosphoserine.

This sequence belongs to the yippee family. As to quaternary structure, identified in the CTLH complex that contains GID4, RANBP9 and/or RANBP10, MKLN1, MAEA, RMND5A (or alternatively its paralog RMND5B), GID8, ARMC8, WDR26 and YPEL5. Within this complex, MAEA, RMND5A (or alternatively its paralog RMND5B), GID8, WDR26, and RANBP9 and/or RANBP10 form the catalytic core, while GID4, MKLN1, ARMC8 and YPEL5 have ancillary roles. Interacts with RANBP9 and RANBP10.

Its subcellular location is the nucleus. The protein resides in the cytoplasm. The protein localises to the cytoskeleton. It localises to the microtubule organizing center. It is found in the centrosome. Its subcellular location is the spindle pole. The protein resides in the midbody. In terms of biological role, component of the CTLH E3 ubiquitin-protein ligase complex that selectively accepts ubiquitin from UBE2H and mediates ubiquitination and subsequent proteasomal degradation of the transcription factor HBP1. Required for normal cell proliferation. In Macaca fascicularis (Crab-eating macaque), this protein is Protein yippee-like 5 (YPEL5).